We begin with the raw amino-acid sequence, 100 residues long: Urease subunit gamma (100 aa).

Belongs to the urease gamma subunit family. In terms of assembly, heterotrimer of UreA (gamma), UreB (beta) and UreC (alpha) subunits. Three heterotrimers associate to form the active enzyme.

The protein resides in the cytoplasm. The catalysed reaction is urea + 2 H2O + H(+) = hydrogencarbonate + 2 NH4(+). It participates in nitrogen metabolism; urea degradation; CO(2) and NH(3) from urea (urease route): step 1/1. This is Urease subunit gamma from Corynebacterium urealyticum (strain ATCC 43042 / DSM 7109).